Here is a 111-residue protein sequence, read N- to C-terminus: Large ribosomal subunit protein uL24 (111 aa).

Belongs to the universal ribosomal protein uL24 family. Part of the 50S ribosomal subunit.

Functionally, one of two assembly initiator proteins, it binds directly to the 5'-end of the 23S rRNA, where it nucleates assembly of the 50S subunit. One of the proteins that surrounds the polypeptide exit tunnel on the outside of the subunit. The protein is Large ribosomal subunit protein uL24 of Chlamydia pneumoniae (Chlamydophila pneumoniae).